A 306-amino-acid polypeptide reads, in one-letter code: MAKALSLTIFLFLLIASNVQSARLLDEVQTQPQLVPQVPEEEDDSPQAVTTTPTPIPLPGPATGGPEPILEFFMHDVLGGSHPSARVVTGIVAQTEVNGIPFSKSSNNIFPVDNAVPLVNANSINNLINPNTAPLLTGLSGSQANTVIQNSNGNSQGSLSSNNLPFVTTGQLPPIAALQQLMFGSITVVDDELTEGHELGSAIIGRAQGFYLASSLDGTSQTLSLTVLLHEDHDHHDTLDDAISFFGVHRTASHASHIAVVGGTGRFEHAKGYAVVETLHNQEDQHVTDGHDTILHFSVYLTYYKA.

Positions M1–S21 are cleaved as a signal peptide. Positions P36–P61 are disordered.

It belongs to the plant dirigent protein family. Homodimer.

The protein resides in the secreted. It localises to the extracellular space. It is found in the apoplast. Functionally, dirigent proteins impart stereoselectivity on the phenoxy radical-coupling reaction, yielding optically active lignans from two molecules of coniferyl alcohol in the biosynthesis of lignans, flavonolignans, and alkaloids and thus plays a central role in plant secondary metabolism. This chain is Dirigent protein 24 (DIR24), found in Arabidopsis thaliana (Mouse-ear cress).